The following is a 186-amino-acid chain: Large ribosomal subunit protein uL5 (186 aa).

The protein belongs to the universal ribosomal protein uL5 family. In terms of assembly, part of the 50S ribosomal subunit; part of the 5S rRNA/L5/L18/L25 subcomplex. Contacts the 5S rRNA and the P site tRNA. Forms a bridge to the 30S subunit in the 70S ribosome.

This is one of the proteins that bind and probably mediate the attachment of the 5S RNA into the large ribosomal subunit, where it forms part of the central protuberance. In the 70S ribosome it contacts protein S13 of the 30S subunit (bridge B1b), connecting the 2 subunits; this bridge is implicated in subunit movement. Contacts the P site tRNA; the 5S rRNA and some of its associated proteins might help stabilize positioning of ribosome-bound tRNAs. This chain is Large ribosomal subunit protein uL5, found in Jannaschia sp. (strain CCS1).